The sequence spans 215 residues: Osteoclast-stimulating factor 1 (215 aa).

An N-acetylserine modification is found at S2. The SH3 domain maps to 12–71 (GQVKVFRALYTFEPRTPDELYFEEGDIIYITDMSDTSWWKGTCKGRTGLIPSNYVAEQAE). ANK repeat units lie at residues 72 to 101 (SIDNPLHEAAKRGNLSWLRECLDNRVGVNG), 105 to 135 (AGSTALYWACHGGHKDIVEVLFTQPNVELNQ), and 139 to 168 (LGDTALHAAAWKGYADIVQLLLAKGARTDL). A disordered region spans residues 192–215 (KQQGTDGARTLSNAEDYLDDEDSD). Phosphothreonine is present on T201. S203 and S214 each carry phosphoserine.

Interacts with C-SRC and SMN1. Interacts with FASLG.

The protein resides in the cytoplasm. Functionally, induces bone resorption, acting probably through a signaling cascade which results in the secretion of factor(s) enhancing osteoclast formation and activity. The polypeptide is Osteoclast-stimulating factor 1 (Ostf1) (Mus musculus (Mouse)).